We begin with the raw amino-acid sequence, 213 residues long: GTP cyclohydrolase 1 (213 aa).

3 residues coordinate Zn(2+): cysteine 104, histidine 107, and cysteine 175.

Belongs to the GTP cyclohydrolase I family. In terms of assembly, toroid-shaped homodecamer, composed of two pentamers of five dimers.

The catalysed reaction is GTP + H2O = 7,8-dihydroneopterin 3'-triphosphate + formate + H(+). It functions in the pathway cofactor biosynthesis; 7,8-dihydroneopterin triphosphate biosynthesis; 7,8-dihydroneopterin triphosphate from GTP: step 1/1. The protein is GTP cyclohydrolase 1 of Brucella abortus (strain 2308).